Consider the following 624-residue polypeptide: Protein FAM234B (624 aa).

Positions 1 to 91 (MATVLSRALK…GFPSEPLGGL (91 aa)) are disordered. Serine 16 is subject to Phosphoserine. Phosphothreonine is present on threonine 26. Serine 30, serine 33, and serine 63 each carry phosphoserine. Residues 107-127 (VFLLTLVISMVLVLLCAFLIP) form a helical membrane-spanning segment.

This sequence belongs to the FAM234 family.

The protein resides in the membrane. It is found in the golgi outpost. Its subcellular location is the cytoplasm. The protein localises to the cytoskeleton. It localises to the microtubule organizing center. In Mus musculus (Mouse), this protein is Protein FAM234B.